Here is a 330-residue protein sequence, read N- to C-terminus: Phenylalanine--tRNA ligase alpha subunit (330 aa).

E246 serves as a coordination point for Mg(2+).

The protein belongs to the class-II aminoacyl-tRNA synthetase family. Phe-tRNA synthetase alpha subunit type 1 subfamily. As to quaternary structure, tetramer of two alpha and two beta subunits. It depends on Mg(2+) as a cofactor.

The protein localises to the cytoplasm. It carries out the reaction tRNA(Phe) + L-phenylalanine + ATP = L-phenylalanyl-tRNA(Phe) + AMP + diphosphate + H(+). The sequence is that of Phenylalanine--tRNA ligase alpha subunit from Wolinella succinogenes (strain ATCC 29543 / DSM 1740 / CCUG 13145 / JCM 31913 / LMG 7466 / NCTC 11488 / FDC 602W) (Vibrio succinogenes).